We begin with the raw amino-acid sequence, 297 residues long: Phosphoribosylaminoimidazole-succinocarboxamide synthase (297 aa).

It belongs to the SAICAR synthetase family.

The catalysed reaction is 5-amino-1-(5-phospho-D-ribosyl)imidazole-4-carboxylate + L-aspartate + ATP = (2S)-2-[5-amino-1-(5-phospho-beta-D-ribosyl)imidazole-4-carboxamido]succinate + ADP + phosphate + 2 H(+). The protein operates within purine metabolism; IMP biosynthesis via de novo pathway; 5-amino-1-(5-phospho-D-ribosyl)imidazole-4-carboxamide from 5-amino-1-(5-phospho-D-ribosyl)imidazole-4-carboxylate: step 1/2. The protein is Phosphoribosylaminoimidazole-succinocarboxamide synthase of Corynebacterium urealyticum (strain ATCC 43042 / DSM 7109).